The following is a 299-amino-acid chain: Probable lipid kinase YegS-like (299 aa).

The region spanning 2 to 133 is the DAGKc domain; that stretch reads ATYPESLLIL…VDIAQVNDKT (132 aa). ATP contacts are provided by residues Thr-40, 66 to 72, and Thr-95; that span reads GDGTINE. Mg(2+)-binding residues include Leu-215, Asp-218, and Leu-220. The active-site Proton acceptor is the Glu-271.

It belongs to the diacylglycerol/lipid kinase family. YegS lipid kinase subfamily. Requires Mg(2+) as cofactor. The cofactor is Ca(2+).

The protein localises to the cytoplasm. Its function is as follows. Probably phosphorylates lipids; the in vivo substrate is unknown. The polypeptide is Probable lipid kinase YegS-like (Enterobacter sp. (strain 638)).